We begin with the raw amino-acid sequence, 66 residues long: Large ribosomal subunit protein uL29 (66 aa).

Belongs to the universal ribosomal protein uL29 family.

This chain is Large ribosomal subunit protein uL29, found in Mesorhizobium japonicum (strain LMG 29417 / CECT 9101 / MAFF 303099) (Mesorhizobium loti (strain MAFF 303099)).